Consider the following 251-residue polypeptide: tRNA (guanine-N(7)-)-methyltransferase (251 aa).

Residues glycine 72, 95–96 (EI), 132–133 (NA), and leucine 152 each bind S-adenosyl-L-methionine. The active site involves aspartate 155. 230–232 (SEE) contacts S-adenosyl-L-methionine.

Belongs to the class I-like SAM-binding methyltransferase superfamily. TrmB family.

It is found in the nucleus. The catalysed reaction is guanosine(46) in tRNA + S-adenosyl-L-methionine = N(7)-methylguanosine(46) in tRNA + S-adenosyl-L-homocysteine. It functions in the pathway tRNA modification; N(7)-methylguanine-tRNA biosynthesis. Functionally, catalyzes the formation of N(7)-methylguanine at position 46 (m7G46) in tRNA. The sequence is that of tRNA (guanine-N(7)-)-methyltransferase from Drosophila willistoni (Fruit fly).